We begin with the raw amino-acid sequence, 188 residues long: Zinc finger protein 428 (188 aa).

The interval 1 to 162 (MTETREPAET…EEEEEEGTYH (162 aa)) is disordered. The span at 40–61 (PDSEEEEDEEEEEEETTDDPEY) shows a compositional bias: acidic residues. Positions 84–94 (RAAQPPAQPCQ) are enriched in low complexity. Residue Thr-108 is modified to Phosphothreonine. Positions 116-129 (PATAPQEAPAPEGR) are enriched in low complexity. A compositionally biased stretch (basic and acidic residues) spans 138–149 (PPRAGEGRPAGR). A C2H2-type zinc finger spans residues 161–183 (YHCTECEDSFDNLGELHGHFMLH).

This Homo sapiens (Human) protein is Zinc finger protein 428 (ZNF428).